The chain runs to 1079 residues: Integrator complex subunit 3 homolog (1079 aa).

3 disordered regions span residues 544–574, 925–949, and 1010–1079; these read ETEAVFSDEDGENLGRCTKNEENTDDDDDLP, YPSSSPNKRKRPSKGSSAASSTPSA, and AVGR…NDSD. Residues 938 to 949 show a composition bias toward low complexity; it reads KGSSAASSTPSA. Ser-1049, Ser-1050, Ser-1054, and Ser-1055 each carry phosphoserine. Residues 1062–1073 show a composition bias toward basic residues; it reads HKITQAAKKRKK.

It belongs to the Integrator subunit 3 family. As to quaternary structure, belongs to the multiprotein complex Integrator, at least composed of IntS1, IntS2, IntS3, IntS4, omd/IntS5, IntS6, defl/IntS7, IntS8, IntS9, IntS10, IntS11, IntS12, asun/IntS13, IntS14 and IntS15. The core complex associates with protein phosphatase 2A subunits mts/PP2A and Pp2A-29B, to form the Integrator-PP2A (INTAC) complex.

It is found in the nucleus. It localises to the cytoplasm. Functionally, component of the integrator complex, a multiprotein complex that terminates RNA polymerase II (Pol II) transcription in the promoter-proximal region of genes. The integrator complex provides a quality checkpoint during transcription elongation by driving premature transcription termination of transcripts that are unfavorably configured for transcriptional elongation: the complex terminates transcription by (1) catalyzing dephosphorylation of the C-terminal domain (CTD) of Pol II subunit Polr2A/Rbp1 and Spt5, and (2) degrading the exiting nascent RNA transcript via endonuclease activity. The integrator complex is also involved in the 3'-end processing of the U7 snRNA, and also the spliceosomal snRNAs U1, U2, U4 and U5. This Drosophila mojavensis (Fruit fly) protein is Integrator complex subunit 3 homolog (IntS3).